The primary structure comprises 205 residues: Recombination protein RecR (205 aa).

Residues 59 to 74 (CARCNTFCEGGLCDIC) form a C4-type zinc finger. The Toprim domain maps to 82-177 (RRLMVVHMPA…KVSRLSQGIP (96 aa)).

It belongs to the RecR family.

Its function is as follows. May play a role in DNA repair. It seems to be involved in an RecBC-independent recombinational process of DNA repair. It may act with RecF and RecO. This Neisseria meningitidis serogroup A / serotype 4A (strain DSM 15465 / Z2491) protein is Recombination protein RecR.